The chain runs to 408 residues: Phosphopentomutase (408 aa).

D10, D307, H312, D348, H349, and H360 together coordinate Mn(2+).

Belongs to the phosphopentomutase family. Mn(2+) is required as a cofactor.

The protein localises to the cytoplasm. It catalyses the reaction 2-deoxy-alpha-D-ribose 1-phosphate = 2-deoxy-D-ribose 5-phosphate. The catalysed reaction is alpha-D-ribose 1-phosphate = D-ribose 5-phosphate. The protein operates within carbohydrate degradation; 2-deoxy-D-ribose 1-phosphate degradation; D-glyceraldehyde 3-phosphate and acetaldehyde from 2-deoxy-alpha-D-ribose 1-phosphate: step 1/2. Functionally, isomerase that catalyzes the conversion of deoxy-ribose 1-phosphate (dRib-1-P) and ribose 1-phosphate (Rib-1-P) to deoxy-ribose 5-phosphate (dRib-5-P) and ribose 5-phosphate (Rib-5-P), respectively. This is Phosphopentomutase from Buchnera aphidicola subsp. Baizongia pistaciae (strain Bp).